A 121-amino-acid chain; its full sequence is Large ribosomal subunit protein uL18 (121 aa).

Belongs to the universal ribosomal protein uL18 family. As to quaternary structure, part of the 50S ribosomal subunit; part of the 5S rRNA/L5/L18/L25 subcomplex. Contacts the 5S and 23S rRNAs.

Its function is as follows. This is one of the proteins that bind and probably mediate the attachment of the 5S RNA into the large ribosomal subunit, where it forms part of the central protuberance. This chain is Large ribosomal subunit protein uL18, found in Polaromonas sp. (strain JS666 / ATCC BAA-500).